A 435-amino-acid chain; its full sequence is Divergent protein kinase domain 2B (435 aa).

The signal sequence occupies residues 1–33; the sequence is MESQWRGAAATAFHQHWLARLLLWVSTLSCSFS. N-linked (GlcNAc...) asparagine glycans are attached at residues Asn102 and Asn395.

This sequence belongs to the DIPK family.

It is found in the secreted. This is Divergent protein kinase domain 2B (Dipk2b) from Mus musculus (Mouse).